The primary structure comprises 224 residues: uncharacterized protein (224 aa).

A signal peptide spans 1–19 (MLRHITFTVFITTSMNTLA).

The protein belongs to the periplasmic pilus chaperone family.

The protein resides in the periplasm. Its function is as follows. Could be required for the biogenesis of a putative fimbria. This is an uncharacterized protein from Escherichia coli (strain K12).